A 392-amino-acid polypeptide reads, in one-letter code: B2 bradykinin receptor (392 aa).

At 1 to 61 (MPCSWKLLGF…EWWSWLNAIQ (61 aa)) the chain is on the extracellular side. 2 N-linked (GlcNAc...) asparagine glycosylation sites follow: asparagine 29 and asparagine 40. A helical transmembrane segment spans residues 62–85 (APFLWVLFLLAALENLFVLSVFFL). Residues 86–94 (HKNSCTVAE) lie on the Cytoplasmic side of the membrane. The chain crosses the membrane as a helical span at residues 95-119 (IYLGNLAAADLILACGLPFWAITIA). Over 120-132 (NNFDWVFGEVLCR) the chain is Extracellular. Cysteine 131 and cysteine 212 are disulfide-bonded. Residues 133–154 (VVNTMIYMNLYSSICFLMLVSI) form a helical membrane-spanning segment. Over 155–176 (DRYLALVKTMSMGRMRGVRWAK) the chain is Cytoplasmic. Phosphotyrosine is present on tyrosine 157. Residues 177–199 (LYSLVIWGCTLLLSSPMLVFRTM) form a helical membrane-spanning segment. The Extracellular segment spans residues 200-222 (REYSEEGHNVTACVIVYPSRSWE). An N-linked (GlcNAc...) asparagine glycan is attached at asparagine 208. The helical transmembrane segment at 223–249 (VFTNVLLNLVGFLLPLSVITFCTVRIL) threads the bilayer. Residues 250–268 (QVLRNNEMKKFKEVQTERK) lie on the Cytoplasmic side of the membrane. The chain crosses the membrane as a helical span at residues 269-293 (ATVLVLAVLGLFVLCWVPFQISTFL). The Extracellular portion of the chain corresponds to 294-312 (DTLLRLGVLSGCWDEHAVD). The chain crosses the membrane as a helical span at residues 313 to 336 (VITQISSYVAYSNSGLNPLVYVIV). The Cytoplasmic portion of the chain corresponds to 337 to 392 (GKRFRKKSREVYRVLCQKGGCMGEPVQMENSMGTLRTSISVERQIHKLQDWAGKKQ). Position 348 is a phosphotyrosine (tyrosine 348). The S-palmitoyl cysteine moiety is linked to residue cysteine 352. Serine 367 is subject to Phosphoserine. Position 370 is a phosphothreonine (threonine 370). Residues serine 374 and serine 376 each carry the phosphoserine; by GRK6 modification.

It belongs to the G-protein coupled receptor 1 family. Bradykinin receptor subfamily. BDKRB2 sub-subfamily. As to quaternary structure, forms a complex with PECAM1 and GNAQ. Interacts with PECAM1.

The protein localises to the cell membrane. Functionally, receptor for bradykinin. It is associated with G proteins that activate a phosphatidylinositol-calcium second messenger system. The chain is B2 bradykinin receptor (Bdkrb2) from Mus musculus (Mouse).